The following is a 293-amino-acid chain: ATP synthase gamma chain (293 aa).

Belongs to the ATPase gamma chain family. As to quaternary structure, F-type ATPases have 2 components, CF(1) - the catalytic core - and CF(0) - the membrane proton channel. CF(1) has five subunits: alpha(3), beta(3), gamma(1), delta(1), epsilon(1). CF(0) has three main subunits: a, b and c.

The protein resides in the cell inner membrane. Produces ATP from ADP in the presence of a proton gradient across the membrane. The gamma chain is believed to be important in regulating ATPase activity and the flow of protons through the CF(0) complex. This Psychrobacter cryohalolentis (strain ATCC BAA-1226 / DSM 17306 / VKM B-2378 / K5) protein is ATP synthase gamma chain.